Reading from the N-terminus, the 497-residue chain is ATP-dependent RNA helicase CshA (497 aa).

Positions 1-29 (MKFSELGLSDSLLKAIKRSGYEEATPIQE) match the Q motif motif. Residues 32–202 (IPMVLEGKDV…VQFMSDPETV (171 aa)) form the Helicase ATP-binding domain. Residue 45–52 (AQTGTGKT) coordinates ATP. Residues 150 to 153 (DEAD) carry the DEAD box motif. In terms of domain architecture, Helicase C-terminal spans 228–373 (DIMTRLIDVQ…PLKPPTAEEA (146 aa)). Residues 425 to 497 (AASEVPVKIT…SFNIRHRKEN (73 aa)) are disordered. Residues 448 to 458 (RNGNRNNSHGG) show a composition bias toward low complexity. 2 stretches are compositionally biased toward basic residues: residues 459–473 (NHYR…QHGS) and 481–497 (KSHS…RKEN).

This sequence belongs to the DEAD box helicase family. CshA subfamily. In terms of assembly, oligomerizes, may be a member of the RNA degradosome.

The protein resides in the cytoplasm. Its subcellular location is the cell membrane. The catalysed reaction is ATP + H2O = ADP + phosphate + H(+). DEAD-box RNA helicase possibly involved in RNA degradation. Unwinds dsRNA in both 5'- and 3'-directions, has RNA-dependent ATPase activity. Over-expression leads to cell aggregation. This chain is ATP-dependent RNA helicase CshA, found in Limosilactobacillus reuteri (Lactobacillus reuteri).